The chain runs to 406 residues: Putative phosphate permease TK2061 (406 aa).

Transmembrane regions (helical) follow at residues 2-22, 45-65, 82-102, 115-135, 139-159, 182-202, 208-228, 288-308, 324-346, and 385-405; these read AVMDPWLLITIIVGFGMAWAI, AVLIAGVLEFTGAYFFGKSVT, TVLIYGSVAALLAATIWLVIA, IIGGIVGYGIVYAGFSIVNWG, QVVLSWILSPIIGAIMAFLVF, FWIGLAFVVIGTMFYIKVLHG, GVLFYGIPAGLVVFLILFLTL, VPVPRWILAMGGLGIAIGVAT, LTNTRGFTIDFSAATVVLVASWL, and FVTVPVAALISAFLFKILMIV.

This sequence belongs to the inorganic phosphate transporter (PiT) (TC 2.A.20) family.

Its subcellular location is the cell membrane. In terms of biological role, potential transporter for phosphate. This chain is Putative phosphate permease TK2061, found in Thermococcus kodakarensis (strain ATCC BAA-918 / JCM 12380 / KOD1) (Pyrococcus kodakaraensis (strain KOD1)).